Reading from the N-terminus, the 306-residue chain is UDP-3-O-acyl-N-acetylglucosamine deacetylase (306 aa).

The Zn(2+) site is built by H79, H238, and D242. The active-site Proton donor is the H265.

The protein belongs to the LpxC family. The cofactor is Zn(2+).

The enzyme catalyses a UDP-3-O-[(3R)-3-hydroxyacyl]-N-acetyl-alpha-D-glucosamine + H2O = a UDP-3-O-[(3R)-3-hydroxyacyl]-alpha-D-glucosamine + acetate. It functions in the pathway glycolipid biosynthesis; lipid IV(A) biosynthesis; lipid IV(A) from (3R)-3-hydroxytetradecanoyl-[acyl-carrier-protein] and UDP-N-acetyl-alpha-D-glucosamine: step 2/6. In terms of biological role, catalyzes the hydrolysis of UDP-3-O-myristoyl-N-acetylglucosamine to form UDP-3-O-myristoylglucosamine and acetate, the committed step in lipid A biosynthesis. The protein is UDP-3-O-acyl-N-acetylglucosamine deacetylase of Shewanella sediminis (strain HAW-EB3).